The primary structure comprises 569 residues: MFMSSDANACEIDIKPRSRVVTHGIEATTSRGMLRAVGMGDADWEKPQIGIASSWNNITPCNLSLDRLAQGAREGVHAAGGYPLQFCTISVSDGISMGHEGMHFSLVSREVITDSVETVLMAEALDGVVLLAGCDKSLPGMLMAAARLDVSAVFLYAGSIAPGYVTLKCGESKEVTIIDSFEAVGAYKAGLIDQDDLGRIERAICPGEGACGGMYTANTMASVAEALGMSLLGSASPPSADRRRDVYAHKSGEAVVELLKRGITARDILTKEAFENAIAVVMALGGSTNAVLHLLAIAHEAHVPLTIDDFNKIGNRVPHIADLKPFGRYVMNDVDRVGGIPVVINALMREGFIHGDVITVSGRTMAEEISDINPGLPDGKVIHSFSSPLHPTGGIKVLKGTLAPDGAVAKTAGFDTVVFQGPAMVFDRERAAMDALSAGNIKKGSVIVIRYEGPKGGPGMREMLAITAAIKGSGLGKDVLLLTDGRFSGGTTGLCIGHIAPEAVDLGPIAFVQDGDIIRVDIEKSGIDVLVDEKQLRARHLTPPPPRYTSGVLSKYSKLVKSASLGAIT.

Cys61 serves as a coordination point for [2Fe-2S] cluster. Asp93 is a Mg(2+) binding site. Cys134 lines the [2Fe-2S] cluster pocket. 2 residues coordinate Mg(2+): Asp135 and Lys136. An N6-carboxylysine modification is found at Lys136. Cys211 lines the [2Fe-2S] cluster pocket. Glu462 lines the Mg(2+) pocket. Ser488 serves as the catalytic Proton acceptor.

Belongs to the IlvD/Edd family. Homodimer. [2Fe-2S] cluster is required as a cofactor. Mg(2+) serves as cofactor.

The enzyme catalyses (2R)-2,3-dihydroxy-3-methylbutanoate = 3-methyl-2-oxobutanoate + H2O. The catalysed reaction is (2R,3R)-2,3-dihydroxy-3-methylpentanoate = (S)-3-methyl-2-oxopentanoate + H2O. Its pathway is amino-acid biosynthesis; L-isoleucine biosynthesis; L-isoleucine from 2-oxobutanoate: step 3/4. The protein operates within amino-acid biosynthesis; L-valine biosynthesis; L-valine from pyruvate: step 3/4. Functions in the biosynthesis of branched-chain amino acids. Catalyzes the dehydration of (2R,3R)-2,3-dihydroxy-3-methylpentanoate (2,3-dihydroxy-3-methylvalerate) into 2-oxo-3-methylpentanoate (2-oxo-3-methylvalerate) and of (2R)-2,3-dihydroxy-3-methylbutanoate (2,3-dihydroxyisovalerate) into 2-oxo-3-methylbutanoate (2-oxoisovalerate), the penultimate precursor to L-isoleucine and L-valine, respectively. This Tropheryma whipplei (strain Twist) (Whipple's bacillus) protein is Dihydroxy-acid dehydratase.